Consider the following 376-residue polypeptide: DNA replication and repair protein RecF (376 aa).

Residue 35 to 42 (GDNGSGKT) coordinates ATP.

The protein belongs to the RecF family.

The protein localises to the cytoplasm. Functionally, the RecF protein is involved in DNA metabolism; it is required for DNA replication and normal SOS inducibility. RecF binds preferentially to single-stranded, linear DNA. It also seems to bind ATP. The sequence is that of DNA replication and repair protein RecF from Agrobacterium fabrum (strain C58 / ATCC 33970) (Agrobacterium tumefaciens (strain C58)).